A 211-amino-acid chain; its full sequence is Urease accessory protein UreG (211 aa).

11 to 18 contacts GTP; that stretch reads GPVGSGKT.

Belongs to the SIMIBI class G3E GTPase family. UreG subfamily. Homodimer. UreD, UreF and UreG form a complex that acts as a GTP-hydrolysis-dependent molecular chaperone, activating the urease apoprotein by helping to assemble the nickel containing metallocenter of UreC. The UreE protein probably delivers the nickel.

It localises to the cytoplasm. Functionally, facilitates the functional incorporation of the urease nickel metallocenter. This process requires GTP hydrolysis, probably effectuated by UreG. The chain is Urease accessory protein UreG from Laribacter hongkongensis (strain HLHK9).